A 746-amino-acid chain; its full sequence is Iron-sulfur clusters transporter ABCB7, mitochondrial (746 aa).

A mitochondrion-targeting transit peptide spans 1-19 (MAPMLVSLNCGIRVQRRTL). Topologically, residues 20–133 (TLLIRQTSSY…KDRPDLRARV (114 aa)) are mitochondrial matrix. One can recognise an ABC transmembrane type-1 domain in the interval 133–429 (VAVSLGLLAG…LGTVYRETRQ (297 aa)). The helical transmembrane segment at 134–154 (AVSLGLLAGAKLTNVMVPFMF) threads the bilayer. Over 155 to 176 (KYAVDELNQMSGHMLNLNDAPS) the chain is Mitochondrial intermembrane. Residues 177-199 (TVATMTTAVLIGYGVSRAGSALF) traverse the membrane as a helical segment. Over 200 to 252 (NELRNTVFGKVAQSSIRRIAKNVFLHLHNLDLGFHLSRQTGALSKAIDRGTRG) the chain is Mitochondrial matrix. A helical membrane pass occupies residues 253–273 (ISFVLSALVFNLGPTVFEMFL). Residues 274–283 (VSAILYYKCG) lie on the Mitochondrial intermembrane side of the membrane. Residues 284-304 (GEFAAVALGTLSAYTIFTILV) traverse the membrane as a helical segment. The Mitochondrial matrix portion of the chain corresponds to 305-375 (TQWRTRFRIE…TLAMLNFGQS (71 aa)). Glutathione contacts are provided by residues 308–312 (RTRFR) and 371–374 (NFGQ). Residues 376–396 (AIFSVGLTAIMLLASKGIAAG) form a helical membrane-spanning segment. At 397-402 (NMTVGD) the chain is on the mitochondrial intermembrane side. A helical membrane pass occupies residues 403-423 (LVMVNGLLFQLSLPLNFLGTV). Gly-421 contributes to the glutathione binding site. Topologically, residues 424-746 (YRETRQALID…SVKGCGNCSC (323 aa)) are mitochondrial matrix. In terms of domain architecture, ABC transporter spans 465 to 699 (IRFEDVYFEY…PGSLYAELWN (235 aa)). ATP contacts are provided by residues Tyr-474 and 498–505 (GGSGSGKS). Residues 708–728 (SRKSSSAPAAERLSQKEEERK) are disordered.

It belongs to the ABC transporter superfamily. ABCB family. Heavy Metal importer (TC 3.A.1.210) subfamily. As to quaternary structure, homodimer.

It localises to the mitochondrion inner membrane. Its subcellular location is the mitochondrion. It catalyses the reaction (glutathione)4[2Fe(III)-2S] cluster(in) + ATP + H2O = (glutathione)4[2Fe(III)-2S] cluster(out) + ADP + phosphate + H(+). In terms of biological role, exports glutathione-coordinated iron-sulfur clusters such as [2Fe-2S]-(GS)4 cluster from the mitochondria to the cytosol in an ATP-dependent manner allowing the assembly of the cytosolic iron-sulfur (Fe/S) cluster-containing proteins and participates in iron homeostasis. May play a role in iron and lipid metabolism. The protein is Iron-sulfur clusters transporter ABCB7, mitochondrial of Oryzias latipes (Japanese rice fish).